Here is a 959-residue protein sequence, read N- to C-terminus: MAASTGYVRLWGAARCWVLRRPMLAAAGGRVPTAAGAWLLRGQRTCDASPPWALWGRGPAIGGQWRGFWEASSRGGGAFSGGEDASEGGAEEGAGGAGGSAGAGEGPVITALTPMTIPDVFPHLPLIAITRNPVFPRFIKIIEVKNKKLVELLRRKVRLAQPYVGVFLKRDDSNESDVVESLDEIYHTGTFAQIHEMQDLGDKLRMIVMGHRRVHISRQLEVEPEEPEAENKHKPRRKSKRGKKEAEDELSARHPAELAMEPTPELPAEVLMVEVENVVHEDFQVTEEVKALTAEIVKTIRDIIALNPLYRESVLQMMQAGQRVVDNPIYLSDMGAALTGAESHELQDVLEETNIPKRLYKALSLLKKEFELSKLQQRLGREVEEKIKQTHRKYLLQEQLKIIKKELGLEKDDKDAIEEKFRERLKELVVPKHVMDVVDEELSKLGLLDNHSSEFNVTRNYLDWLTSIPWGKYSNENLDLARAQAVLEEDHYGMEDVKKRILEFIAVSQLRGSTQGKILCFYGPPGVGKTSIARSIARALNREYFRFSVGGMTDVAEIKGHRRTYVGAMPGKIIQCLKKTKTENPLILIDEVDKIGRGYQGDPSSALLELLDPEQNANFLDHYLDVPVDLSKVLFICTANVTDTIPEPLRDRMEMINVSGYVAQEKLAIAERYLVPQARALCGLDESKAKLSSDVLTLLIKQYCRESGVRNLQKQVEKVLRKSAYKIVSGEAESVEVTPENLQDFVGKPVFTVERMYDVTPPGVVMGLAWTAMGGSTLFVETSLRRPQDKDAKGDKDGSLEVTGQLGEVMKESARIAYTFARAFLMQHAPANDYLVTSHIHLHVPEGATPKDGPSAGCTIVTALLSLAMGRPVRQNLAMTGEVSLTGKILPVGGIKEKTIAAKRAGVTCIVLPAENKKDFYDLAAFITEGLEVHFVEHYREIFDIAFPDEQAEALAVER.

Residues 1 to 67 constitute a mitochondrion transit peptide; sequence MAASTGYVRL…GPAIGGQWRG (67 aa). 2 disordered regions span residues 77-102 and 218-257; these read GAFSGGEDASEGGAEEGAGGAGGSAG and RQLEVEPEEPEAENKHKPRRKSKRGKKEAEDELSARHPAE. Residues 91–102 show a composition bias toward gly residues; the sequence is EEGAGGAGGSAG. The region spanning 124–370 is the Lon N-terminal domain; that stretch reads LPLIAITRNP…KALSLLKKEF (247 aa). Positions 233–243 are enriched in basic residues; the sequence is HKPRRKSKRGK. Basic and acidic residues predominate over residues 244 to 256; that stretch reads KEAEDELSARHPA. An ATP-binding site is contributed by 523–530; it reads GPPGVGKT. The Lon proteolytic domain occupies 759 to 949; sequence VTPPGVVMGL…REIFDIAFPD (191 aa). Active-site residues include Ser855 and Lys898.

It belongs to the peptidase S16 family. As to quaternary structure, homohexamer. Organized in a ring with a central cavity. The ATP-binding and proteolytic domains (AP-domain) form a hexameric chamber, while the N-terminal domain is arranged as a trimer of dimers. DNA and RNA binding is stimulated by substrate and inhibited by ATP binding. Interacts with TWNK and mitochondrial DNA polymerase subunit POLG. Duodenum, heart, lung and liver, but not thymus.

The protein localises to the mitochondrion matrix. The enzyme catalyses Hydrolysis of proteins in presence of ATP.. Its activity is regulated as follows. Peptidase activity is subject to substrate inhibition by ATP. Its function is as follows. ATP-dependent serine protease that mediates the selective degradation of misfolded, unassembled or oxidatively damaged polypeptides as well as certain short-lived regulatory proteins in the mitochondrial matrix. Endogenous substrates include mitochondrial steroidogenic acute regulatory (StAR) protein, DELE1, helicase Twinkle (TWNK) and the large ribosomal subunit protein MRPL32/bL32m. MRPL32/bL32m is protected from degradation by LONP1 when it is bound to a nucleic acid (RNA), but TWNK is not. May also have a chaperone function in the assembly of inner membrane protein complexes. Participates in the regulation of mitochondrial gene expression and in the maintenance of the integrity of the mitochondrial genome. Binds to mitochondrial promoters and RNA in a single-stranded, site-specific, and strand-specific manner. May regulate mitochondrial DNA replication and/or gene expression using site-specific, single-stranded DNA binding to target the degradation of regulatory proteins binding to adjacent sites in mitochondrial promoters. This Homo sapiens (Human) protein is Lon protease homolog, mitochondrial.